Here is a 4146-residue protein sequence, read N- to C-terminus: DNA-dependent protein kinase catalytic subunit (4146 aa).

4 HEAT repeats span residues 308-343 (DDYQSLFEVISKWCGHTNGEMKKLAFAALDSFLKQI), 925-962 (VIYLDMFLPHITELALSTSDRQTKVAACELLHSIVAFM), 1026-1062 (QDTVALLEAILTGIVDPVDSTLRDFCGQCIQEFLRWS), and 1075-1111 (PVNTTSLFKRLYSLALHPNAFKRLGAALAFNNIYRDF). TPR repeat units follow at residues 1745–1778 (PMKSDEFPKGTLKFNNYVDCIKKFLDALELSQSP) and 1974–2007 (VFSELKFYQGFLFTEKKEKNLLIFENLIDLQRNY). Position 2075 is a phosphoserine; by autocatalysis (Ser2075). Residue Thr2631 is modified to Phosphothreonine; by autocatalysis. Residue Ser2634 is modified to Phosphoserine; by autocatalysis. Residues Thr2659 and Thr2668 each carry the phosphothreonine; by autocatalysis modification. One can recognise an FAT domain in the interval 2873-3556 (FIACVQDMCY…VYPFMVSGES (684 aa)). The region spanning 3739–4071 (FDERVSVMAS…IHCAKRKLDG (333 aa)) is the PI3K/PI4K catalytic domain. The segment at 3745-3751 (VMASIRK) is G-loop. The tract at residues 3937 to 3945 (GIGDRHLSN) is catalytic loop. Residues 3957–3982 (GIDFGHAFGTATQFLPVPELMPFRLT) are activation loop. The FATC domain occupies 4114–4146 (DGLTEETQVQCLIDQATDPNILGRVWKGWEPWI).

The protein belongs to the PI3/PI4-kinase family. As to quaternary structure, DNA-PK is a heterotrimer of prkdc and the Ku dimer (composed of xrcc6/Ku70 and xrcc5/Ku86). Component of the core long-range non-homologous end joining (NHEJ) complex (also named DNA-PK complex) composed of prkdc, lig4, xrcc4, xrcc6/ku70, xrcc5/ku86 and nhej1/xlf. Additional component of the NHEJ complex includes paxx. Following autophosphorylation, prkdc dissociates from DNA. In terms of processing, autophosphorylated at two clusters, the T2609 cluster and the S2056 cluster. Autophosphorylated on Ser-2075, Thr-2631, Thr-2659 and Thr-2668. Ser-2075 and Thr-2668 are DNA damage-inducible phosphorylation sites (inducible with ionizing radiation, IR) dephosphorylated by PPP5C. Autophosphorylation induces a conformational change that leads to remodeling of the DNA-PK complex, requisite for efficient end processing and DNA repair. Autophosphorylation in trans within DNA-PK complexes loaded on DNA ends leads to the dissociation of PRKDC from DNA and the transition into the short-range NHEJ complex. Autophosphorylation of the T2609 cluster is required for hematopoietic development and protein synthesis in erythrocytes precursors.

It localises to the nucleus. It is found in the nucleolus. It carries out the reaction L-seryl-[protein] + ATP = O-phospho-L-seryl-[protein] + ADP + H(+). The catalysed reaction is L-threonyl-[protein] + ATP = O-phospho-L-threonyl-[protein] + ADP + H(+). Functionally, serine/threonine-protein kinase that acts as a molecular sensor for DNA damage. Involved in DNA nonhomologous end joining (NHEJ) required for double-strand break (DSB) repair and V(D)J recombination. Must be bound to DNA to express its catalytic properties. Promotes processing of hairpin DNA structures in V(D)J recombination by activation of the hairpin endonuclease artemis (DCLRE1C). Recruited by XRCC5 and XRCC6 to DNA ends and is required to (1) protect and align broken ends of DNA, thereby preventing their degradation, (2) and sequester the DSB for repair by NHEJ. Acts as a scaffold protein to aid the localization of DNA repair proteins to the site of damage. The assembly of the DNA-PK complex at DNA ends is also required for the NHEJ ligation step. Found at the ends of chromosomes, suggesting a further role in the maintenance of telomeric stability and the prevention of chromosomal end fusion. As part of the DNA-PK complex, involved in the early steps of ribosome assembly by promoting the processing of precursor rRNA into mature 18S rRNA in the small-subunit processome. Recognizes the substrate consensus sequence [ST]-Q. Phosphorylates 'Ser-139' of histone variant H2AX, thereby regulating DNA damage response mechanism. The sequence is that of DNA-dependent protein kinase catalytic subunit (prkdc) from Xenopus laevis (African clawed frog).